We begin with the raw amino-acid sequence, 2944 residues long: Collagen alpha-1(VII) chain (2944 aa).

An N-terminal signal peptide occupies residues 1-24 (MRLRLLVAALCAAEILMGAPEVWA). Residues 18-1254 (GAPEVWAQPR…TGPCAVHCPK (1237 aa)) are nonhelical region (NC1). The 174-residue stretch at 39–212 (DIVFLLDGSS…SILRTLLPLI (174 aa)) folds into the VWFA 1 domain. Fibronectin type-III domains follow at residues 235 to 330 (GPRD…TAKE), 331 to 417 (GLEL…TASS), 418 to 508 (VEQT…LEQL), 511 to 598 (PVMN…DPEA), 601 to 688 (VVPG…DPLG), 689 to 776 (PVRR…APEP), 779 to 867 (SVSK…PPAT), 870 to 957 (LLET…EPSH), and 959 to 1053 (PSTE…SHGP). N-linked (GlcNAc...) asparagine glycosylation occurs at N338. N787 is a glycosylation site (N-linked (GlcNAc...) asparagine). In terms of domain architecture, VWFA 2 spans 1055 to 1230 (DVVFLLHATR…PGLDRAVSDL (176 aa)). Residue N1110 is glycosylated (N-linked (GlcNAc...) asparagine). The short motif at 1171–1173 (RGD) is the Cell attachment site element. The interval 1255 to 1475 (GQKGEPGVTG…GLRGAPGMTG (221 aa)) is interrupted collagenous region. Residues 1255-2775 (GQKGEPGVTG…GPRGEKGEAA (1521 aa)) form a triple-helical region region. Disordered regions lie at residues 1259 to 1934 (EPGV…GSLP) and 1960 to 2773 (SSGS…EKGE). Low complexity predominate over residues 1338–1352 (RGPQGPKGEPGEPGQ). Gly residues predominate over residues 1353 to 1363 (ITGGGGPGFPG). Basic and acidic residues-rich tracts occupy residues 1397-1406 (KGDKGDRGER) and 1439-1448 (PGEKGEKGDC). Over residues 1507-1518 (PGAAGHPGVEGP) the composition is skewed to low complexity. Basic and acidic residues-rich tracts occupy residues 1527–1536 (RRGEKGEPGR), 1627–1639 (RGRDGEAGEKGDE), and 1666–1680 (VGEKGDQGDPGEDGR). Residues 1813–1822 (PPGPPGPPGV) are compositionally biased toward pro residues. Composition is skewed to basic and acidic residues over residues 1846–1855 (EDGRKGEKGD), 1862–1871 (EGPDGPKGER), and 1968–1984 (PERRPGPKGDPGDRGPP). Positions 2002–2004 (RGD) match the Cell attachment site motif. Gly residues predominate over residues 2040–2049 (GRAGGSGEAG). The span at 2050-2068 (RPGERGERGEKGERGDQGR) shows a compositional bias: basic and acidic residues. The short motif at 2063–2065 (RGD) is the Cell attachment site element. Positions 2074-2083 (LPGPPGPPGP) are enriched in pro residues. A compositionally biased stretch (basic and acidic residues) spans 2130–2140 (DVGEPGKRGHD). Residues P2158, P2167, P2176, and P2179 each carry the 4-hydroxyproline modification. Low complexity-rich tracts occupy residues 2182 to 2197 (PGLAGPAGPQGPSGLK), 2226 to 2241 (SGLVGPQGSPGLPGQV), 2279 to 2299 (PKGEPGPVGAPGQVVVGPPGA), and 2306 to 2317 (PGDLAGALLGEP). Positions 2319 to 2335 (AKGDRGLPGPRGEKGEA) are enriched in basic and acidic residues. The segment covering 2414-2427 (ERGLAGPPGREGAP) has biased composition (low complexity). 2 stretches are compositionally biased toward basic and acidic residues: residues 2462-2477 (RGERGEPGVRGEDGHP) and 2525-2544 (AKGDMGERGPRGIDGDKGPR). Over residues 2576–2594 (PKGEPGAAGIPGEPGAPGK) the composition is skewed to low complexity. The Cell attachment site motif lies at 2601 to 2603 (RGD). Positions 2615 to 2636 (LKGEKGIKGTCGRDGERGDKGE) are enriched in basic and acidic residues. 2 positions are modified to 5-hydroxylysine: K2616 and K2622. A Cell attachment site motif is present at residues 2631 to 2633 (RGD). A 4-hydroxyproline mark is found at P2655, P2658, and P2664. Over residues 2695 to 2704 (GPPGVGGFPG) the composition is skewed to gly residues. The interval 2776 to 2944 (LTEDDIRDFV…GVHSQKTGAA (169 aa)) is nonhelical region (NC2). The region spanning 2879 to 2931 (CSLPLDEGSCTAYTLRWYHRAVPGGTACHPFVYGGCGGNANRFGTREACERRC) is the BPTI/Kunitz inhibitor domain. 3 disulfide bridges follow: C2879–C2931, C2888–C2914, and C2906–C2927.

As to quaternary structure, homotrimer. Interacts with MIA3/TANGO1; facilitating its loading into transport carriers and subsequent secretion. Prolines at the third position of the tripeptide repeating unit (G-X-Y) are hydroxylated in some or all of the chains.

Its subcellular location is the secreted. The protein localises to the extracellular space. The protein resides in the extracellular matrix. It localises to the basement membrane. Stratified squamous epithelial basement membrane protein that forms anchoring fibrils which may contribute to epithelial basement membrane organization and adherence by interacting with extracellular matrix (ECM) proteins such as type IV collagen. The polypeptide is Collagen alpha-1(VII) chain (Mus musculus (Mouse)).